Reading from the N-terminus, the 452-residue chain is Elongation factor Tu, mitochondrial (452 aa).

The N-terminal 43 residues, M1–L43, are a transit peptide targeting the mitochondrion. The tr-type G domain maps to K55 to T251. The G1 stretch occupies residues G64 to T71. GTP is bound by residues D67, G69, K70, T71, and T72. T71 is a binding site for Mg(2+). Position 79 is an N6-acetyllysine (K79). K88 bears the N6-acetyllysine; alternate mark. K88 is subject to N6-succinyllysine; alternate. The interval G105–N109 is G2. The interval D126–G129 is G3. GTP is bound by residues N181, D184, S219, A220, and L221. The tract at residues N181–D184 is G4. The segment at S219–L221 is G5. K234 is subject to N6-succinyllysine. K256 is modified (N6-acetyllysine). Residue T278 is modified to Phosphothreonine. An N6-succinyllysine modification is found at K286. A Phosphoserine modification is found at S312. N6-acetyllysine is present on residues K361 and K418.

It belongs to the TRAFAC class translation factor GTPase superfamily. Classic translation factor GTPase family. EF-Tu/EF-1A subfamily. Interacts with NLRX1. Interacts with ATG16L1.

The protein resides in the mitochondrion. It carries out the reaction GTP + H2O = GDP + phosphate + H(+). In terms of biological role, GTP hydrolase that promotes the GTP-dependent binding of aminoacyl-tRNA to the A-site of ribosomes during protein biosynthesis. Plays a role in the regulation of autophagy and innate immunity. Recruits ATG5-ATG12 and NLRX1 at mitochondria and serves as a checkpoint of the RIGI-MAVS pathway. In turn, inhibits RLR-mediated type I interferon while promoting autophagy. This Rattus norvegicus (Rat) protein is Elongation factor Tu, mitochondrial.